Here is a 146-residue protein sequence, read N- to C-terminus: 3-dehydroquinate dehydratase (146 aa).

Y22 functions as the Proton acceptor in the catalytic mechanism. Substrate-binding residues include N73, H79, and D86. Residue H99 is the Proton donor of the active site. Substrate-binding positions include 100–101 (VS) and R110.

It belongs to the type-II 3-dehydroquinase family. In terms of assembly, homododecamer.

It carries out the reaction 3-dehydroquinate = 3-dehydroshikimate + H2O. It functions in the pathway metabolic intermediate biosynthesis; chorismate biosynthesis; chorismate from D-erythrose 4-phosphate and phosphoenolpyruvate: step 3/7. Catalyzes a trans-dehydration via an enolate intermediate. The chain is 3-dehydroquinate dehydratase from Kineococcus radiotolerans (strain ATCC BAA-149 / DSM 14245 / SRS30216).